Reading from the N-terminus, the 401-residue chain is Glycerol-1-phosphate dehydrogenase [NAD(P)+] (401 aa).

Residues Asp-57, 118–122 (GTIHD), and 140–143 (TAPS) each bind NAD(+). Asp-145 contacts substrate. Ser-149 contributes to the NAD(+) binding site. Position 192 (Asp-192) interacts with substrate. The Ni(2+) site is built by Asp-192 and His-272. His-276 contributes to the substrate binding site. Residue His-292 participates in Ni(2+) binding.

It belongs to the glycerol-1-phosphate dehydrogenase family. As to quaternary structure, homodimer. Requires Ni(2+) as cofactor.

Its subcellular location is the cytoplasm. It carries out the reaction sn-glycerol 1-phosphate + NAD(+) = dihydroxyacetone phosphate + NADH + H(+). The catalysed reaction is sn-glycerol 1-phosphate + NADP(+) = dihydroxyacetone phosphate + NADPH + H(+). Its function is as follows. Catalyzes the NAD(P)H-dependent reduction of dihydroxyacetonephosphate (DHAP or glycerone phosphate) to glycerol 1-phosphate (G1P). The G1P thus generated is probably used for the synthesis of phosphoglycerolipids in Gram-positive bacterial species. This Bacillus licheniformis (strain ATCC 14580 / DSM 13 / JCM 2505 / CCUG 7422 / NBRC 12200 / NCIMB 9375 / NCTC 10341 / NRRL NRS-1264 / Gibson 46) protein is Glycerol-1-phosphate dehydrogenase [NAD(P)+].